We begin with the raw amino-acid sequence, 424 residues long: Protein pellino (424 aa).

The interval 1–21 (MVKRTDGTESPILAEDGGDGH) is disordered. Serine 10 is subject to Phosphoserine.

Belongs to the pellino family. In terms of assembly, interacts with pll.

Functionally, scaffold protein involved in the Toll signaling pathway via its interaction with pelle/pll kinase. The protein is Protein pellino (Pli) of Drosophila melanogaster (Fruit fly).